A 95-amino-acid chain; its full sequence is Aspartyl/glutamyl-tRNA(Asn/Gln) amidotransferase subunit C (95 aa).

It belongs to the GatC family. In terms of assembly, heterotrimer of A, B and C subunits.

The enzyme catalyses L-glutamyl-tRNA(Gln) + L-glutamine + ATP + H2O = L-glutaminyl-tRNA(Gln) + L-glutamate + ADP + phosphate + H(+). It carries out the reaction L-aspartyl-tRNA(Asn) + L-glutamine + ATP + H2O = L-asparaginyl-tRNA(Asn) + L-glutamate + ADP + phosphate + 2 H(+). Its function is as follows. Allows the formation of correctly charged Asn-tRNA(Asn) or Gln-tRNA(Gln) through the transamidation of misacylated Asp-tRNA(Asn) or Glu-tRNA(Gln) in organisms which lack either or both of asparaginyl-tRNA or glutaminyl-tRNA synthetases. The reaction takes place in the presence of glutamine and ATP through an activated phospho-Asp-tRNA(Asn) or phospho-Glu-tRNA(Gln). This is Aspartyl/glutamyl-tRNA(Asn/Gln) amidotransferase subunit C from Hydrogenovibrio crunogenus (strain DSM 25203 / XCL-2) (Thiomicrospira crunogena).